The chain runs to 376 residues: TelA-like protein SERP0976 (376 aa).

The protein belongs to the TelA family.

The protein is TelA-like protein SERP0976 of Staphylococcus epidermidis (strain ATCC 35984 / DSM 28319 / BCRC 17069 / CCUG 31568 / BM 3577 / RP62A).